A 175-amino-acid chain; its full sequence is Nascent polypeptide-associated complex subunit beta (175 aa).

2 disordered regions span residues 1–36 and 129–175; these read MDKE…SQGD and RQAA…EELE. The region spanning 34-101 is the NAC-A/B domain; that stretch reads QGDDRKLQAA…GQTKELTELV (68 aa). A compositionally biased stretch (acidic residues) spans 149–163; the sequence is EGDDEIPDLVDNFDE. A compositionally biased stretch (basic and acidic residues) spans 164-175; sequence AEVKKSDLEELE.

It belongs to the NAC-beta family. In terms of assembly, part of the nascent polypeptide-associated complex (NAC), consisting of EGD2 and EGD1. NAC associates with ribosomes via EGD1.

It localises to the cytoplasm. Its subcellular location is the nucleus. Component of the nascent polypeptide-associated complex (NAC), a dynamic component of the ribosomal exit tunnel, protecting the emerging polypeptides from interaction with other cytoplasmic proteins to ensure appropriate nascent protein targeting. The NAC complex also promotes mitochondrial protein import by enhancing productive ribosome interactions with the outer mitochondrial membrane and blocks the inappropriate interaction of ribosomes translating non-secretory nascent polypeptides with translocation sites in the membrane of the endoplasmic reticulum. EGD1 may act as a transcription factor that exert a negative effect on the expression of several genes that are transcribed by RNA polymerase II. This Cryptococcus neoformans var. neoformans serotype D (strain B-3501A) (Filobasidiella neoformans) protein is Nascent polypeptide-associated complex subunit beta (EGD1).